We begin with the raw amino-acid sequence, 146 residues long: Protein phosphatase 1 regulatory subunit 14D (146 aa).

A compositionally biased stretch (polar residues) spans 1-16 (MLSSSAASCTSPNPDT). Residues 1 to 57 (MLSSSAASCTSPNPDTDNPDKKVRWSSEKRRRASSTDSESKTHLDISKLPRSRRPSR) form a disordered region. Basic and acidic residues-rich tracts occupy residues 18–28 (NPDKKVRWSSE) and 38–48 (SESKTHLDISK). An interaction with protein phosphatase 1 region spans residues 21 to 25 (KKVRW).

Belongs to the PP1 inhibitor family. Post-translationally, phosphorylated on several residues.

It localises to the cytoplasm. Inhibitor of PPP1CA. Has inhibitory activity only when phosphorylated, creating a molecular switch for regulating the phosphorylation status of PPP1CA substrates and smooth muscle contraction. The sequence is that of Protein phosphatase 1 regulatory subunit 14D (Ppp1r14d) from Rattus norvegicus (Rat).